Here is a 245-residue protein sequence, read N- to C-terminus: 1-(5-phosphoribosyl)-5-[(5-phosphoribosylamino)methylideneamino] imidazole-4-carboxamide isomerase (245 aa).

The Proton acceptor role is filled by Asp8. Asp129 (proton donor) is an active-site residue.

Belongs to the HisA/HisF family.

The protein localises to the cytoplasm. The enzyme catalyses 1-(5-phospho-beta-D-ribosyl)-5-[(5-phospho-beta-D-ribosylamino)methylideneamino]imidazole-4-carboxamide = 5-[(5-phospho-1-deoxy-D-ribulos-1-ylimino)methylamino]-1-(5-phospho-beta-D-ribosyl)imidazole-4-carboxamide. It functions in the pathway amino-acid biosynthesis; L-histidine biosynthesis; L-histidine from 5-phospho-alpha-D-ribose 1-diphosphate: step 4/9. In Geotalea uraniireducens (strain Rf4) (Geobacter uraniireducens), this protein is 1-(5-phosphoribosyl)-5-[(5-phosphoribosylamino)methylideneamino] imidazole-4-carboxamide isomerase.